A 299-amino-acid chain; its full sequence is 4-hydroxy-tetrahydrodipicolinate synthase 2 (299 aa).

Thr-54 contributes to the pyruvate binding site. The Proton donor/acceptor role is filled by Tyr-142. Lys-170 (schiff-base intermediate with substrate) is an active-site residue. A pyruvate-binding site is contributed by Val-210.

It belongs to the DapA family. In terms of assembly, homotetramer; dimer of dimers.

The protein resides in the cytoplasm. The catalysed reaction is L-aspartate 4-semialdehyde + pyruvate = (2S,4S)-4-hydroxy-2,3,4,5-tetrahydrodipicolinate + H2O + H(+). Its pathway is amino-acid biosynthesis; L-lysine biosynthesis via DAP pathway; (S)-tetrahydrodipicolinate from L-aspartate: step 3/4. In terms of biological role, catalyzes the condensation of (S)-aspartate-beta-semialdehyde [(S)-ASA] and pyruvate to 4-hydroxy-tetrahydrodipicolinate (HTPA). The polypeptide is 4-hydroxy-tetrahydrodipicolinate synthase 2 (Streptomyces coelicolor (strain ATCC BAA-471 / A3(2) / M145)).